The chain runs to 191 residues: GDP-mannose pyrophosphatase (191 aa).

Residues Tyr17, 38–40, Arg67, and 85–87 each bind GDP-alpha-D-mannose; these read KRE and AGL. The Nudix hydrolase domain maps to 43–180; the sequence is DRGNGATILL…EIRDGKTVLL (138 aa). Residues Ala85, Glu100, and Glu104 each contribute to the Mg(2+) site. Positions 86–106 match the Nudix box motif; sequence GLLDNDEPEVCIRKEAIEETG. Residues Glu104, Glu127, 150–151, and Lys176 contribute to the GDP-alpha-D-mannose site; that span reads DE. Glu151 is a binding site for Mg(2+).

It belongs to the Nudix hydrolase family. NudK subfamily. As to quaternary structure, homodimer. Mg(2+) serves as cofactor.

It carries out the reaction GDP-alpha-D-mannose + H2O = alpha-D-mannose 1-phosphate + GMP + 2 H(+). Functionally, nucleoside diphosphate sugar hydrolase that hydrolyzes GDP-mannose as its preferred substrate, yielding GMP and mannose-1-phosphate. The chain is GDP-mannose pyrophosphatase (nudK) from Escherichia coli (strain K12 / DH10B).